The sequence spans 350 residues: Induced myeloid leukemia cell differentiation protein Mcl-1 (350 aa).

Glycyl lysine isopeptide (Lys-Gly) (interchain with G-Cter in ubiquitin) cross-links involve residues K5 and K40. The interval 47 to 87 (EIGGGEAGAVIGGSAGASPPSTLTPDSRRVARPPPIGAEVP) is disordered. The segment covering 50–61 (GGEAGAVIGGSA) has biased composition (gly residues). The segment at 104 to 175 (RAAPLEEMEA…PAEEEEDELY (72 aa)) is PEST-like. At S121 the chain carries Phosphoserine. A Glycyl lysine isopeptide (Lys-Gly) (interchain with G-Cter in ubiquitin) cross-link involves residue K136. The tract at residues 148–171 (GESGNNTSTDGSLPSTPPPAEEEE) is disordered. The segment covering 150–161 (SGNNTSTDGSLP) has biased composition (polar residues). Position 159 is a phosphoserine; by GSK3-alpha and GSK3-beta (S159). S162 bears the Phosphoserine mark. T163 bears the Phosphothreonine; by MAPK mark. Glycyl lysine isopeptide (Lys-Gly) (interchain with G-Cter in ubiquitin) cross-links involve residues K194 and K197. The BH3 signature appears at 209 to 223 (ALETLRRVGDGVQRN). The short motif at 252-272 (HVFSDGVTNWGRIVTLISFGA) is the BH1 element. Positions 304-319 (DWLVKQRGWDGFVEFF) match the BH2 motif. Residues 328–348 (IRNVLLAFAGVAGVGAGLAYL) traverse the membrane as a helical segment.

Belongs to the Bcl-2 family. Interacts with HIF3A (via C-terminus domain). Interacts with BAD, BOK, BIK and BMF. Interacts with PMAIP1. Interacts with BBC3. Isoform 1 interacts with BAX, BAK1 and TPT1. Heterodimer of isoform 1 and isoform 2. Homodimers of isoform 1 or isoform 2 are not detected. Isoform 2 does not interact with pro-apoptotic BCL2-related proteins. Interacts with RTL10/BOP. Interacts with BCL2L11; may sequester BCL2L11 to prevent its pro-apoptotic activity. Interacts with GIMAP5 and HSPA8/HSC70; the interaction between HSPA8 and MCL1 is impaired in the absence of GIMAP5. In terms of processing, cleaved by CASP3 during apoptosis. In intact cells cleavage occurs preferentially after Asp-127, yielding a pro-apoptotic 28 kDa C-terminal fragment. Rapidly degraded in the absence of phosphorylation on Thr-163 in the PEST region. Post-translationally, phosphorylated on Ser-159, by GSK3, in response to IL3/interleukin-3 withdrawal. Phosphorylation at Ser-159 induces ubiquitination and proteasomal degradation, abrogating the anti-apoptotic activity. Treatment with taxol or okadaic acid induces phosphorylation on additional sites. In terms of processing, ubiquitinated. Ubiquitination is induced by phosphorylation at Ser-159. Deubiquitinated by USP20; leading to increased stability.

The protein resides in the membrane. The protein localises to the cytoplasm. It is found in the mitochondrion. Its subcellular location is the nucleus. It localises to the nucleoplasm. Functionally, involved in the regulation of apoptosis versus cell survival, and in the maintenance of viability but not of proliferation. Mediates its effects by interactions with a number of other regulators of apoptosis. Isoform 1 inhibits apoptosis. Isoform 2 promotes apoptosis. This chain is Induced myeloid leukemia cell differentiation protein Mcl-1 (MCL1), found in Homo sapiens (Human).